Consider the following 266-residue polypeptide: tRNA pseudouridine synthase A (266 aa).

Catalysis depends on D57, which acts as the Nucleophile. A substrate-binding site is contributed by Y115.

Belongs to the tRNA pseudouridine synthase TruA family. As to quaternary structure, homodimer.

It carries out the reaction uridine(38/39/40) in tRNA = pseudouridine(38/39/40) in tRNA. Its function is as follows. Formation of pseudouridine at positions 38, 39 and 40 in the anticodon stem and loop of transfer RNAs. This chain is tRNA pseudouridine synthase A, found in Buchnera aphidicola subsp. Acyrthosiphon pisum (strain APS) (Acyrthosiphon pisum symbiotic bacterium).